Consider the following 793-residue polypeptide: Protein translocase subunit SecA 2 (793 aa).

ATP-binding positions include Gln-77, 95–99 (GEGKT), and Asp-493.

Belongs to the SecA family. Monomer and homodimer. Part of the essential Sec protein translocation apparatus which comprises SecA, SecYEG and auxiliary proteins SecDF. Other proteins may also be involved.

It localises to the cell membrane. It is found in the cytoplasm. It catalyses the reaction ATP + H2O + cellular proteinSide 1 = ADP + phosphate + cellular proteinSide 2.. Its function is as follows. Part of the Sec protein translocase complex. Interacts with the SecYEG preprotein conducting channel. Has a central role in coupling the hydrolysis of ATP to the transfer of proteins into and across the cell membrane, serving as an ATP-driven molecular motor driving the stepwise translocation of polypeptide chains across the membrane. The chain is Protein translocase subunit SecA 2 from Streptococcus sanguinis (strain SK36).